Consider the following 178-residue polypeptide: Flagellar transcriptional regulator FlhC (178 aa).

Residues cysteine 138, cysteine 141, cysteine 158, and cysteine 161 each contribute to the Zn(2+) site.

It belongs to the FlhC family. Heterohexamer composed of two FlhC and four FlhD subunits. Each FlhC binds a FlhD dimer, forming a heterotrimer, and a hexamer assembles by dimerization of two heterotrimers. Zn(2+) is required as a cofactor.

The protein resides in the cytoplasm. Functions in complex with FlhD as a master transcriptional regulator that regulates transcription of several flagellar and non-flagellar operons by binding to their promoter region. Activates expression of class 2 flagellar genes, including fliA, which is a flagellum-specific sigma factor that turns on the class 3 genes. Also regulates genes whose products function in a variety of physiological pathways. In Erwinia tasmaniensis (strain DSM 17950 / CFBP 7177 / CIP 109463 / NCPPB 4357 / Et1/99), this protein is Flagellar transcriptional regulator FlhC.